The primary structure comprises 110 residues: uncharacterized protein (110 aa).

The next 3 membrane-spanning stretches (helical) occupy residues 4 to 26 (LVGG…KSIN), 46 to 68 (ANRY…GLLL), and 72 to 91 (LFIL…FMLT).

The protein localises to the cell membrane. This is an uncharacterized protein from Bacillus subtilis (strain 168).